Here is a 363-residue protein sequence, read N- to C-terminus: Cyclin-D1-1 (363 aa).

The tract at residues 39–77 is disordered; sequence ELEREGEPAQGSSPSSSLSCAAAAAAAADDDDEDEDEHG. Over residues 50–65 the composition is skewed to low complexity; it reads SSPSSSLSCAAAAAAA. A compositionally biased stretch (acidic residues) spans 66 to 75; the sequence is ADDDDEDEDE.

It belongs to the cyclin family. Cyclin D subfamily.

This chain is Cyclin-D1-1 (CYCD1-1), found in Oryza sativa subsp. japonica (Rice).